We begin with the raw amino-acid sequence, 1338 residues long: MAQRILQLAAEGSPERLQEALQGLTEGELGDMVTRQALRGRETAALLKGIFKGSPCSQQSGVLRRLQVYKHCVSLVESGDLHVGKVSEIIGLLMLEARQLPGHALAELATLFVEVIKRGSLSNGKSLELFSTVLTALSNSKESLAYGKGELNGEEFKKQLINTLCSSKWDPQCVIHLANMFRDIPLSGEELQFVVEKVLRMFSKLDLQEIPPLVYQLLLLSAKGSKKTVLEGIISFFNQLDKRQKEEQRVPQSADLEVATVPLDQLRHVEGTVILHIVSAINLDQDIGEELIKHLKTEQQKDPGKALCPFSVSLLLSTAVKHRLQEQIFDFLKTSITRSCKDLQILQASKFLQDLCPQQYDVTAVILEVVKNSAFGWDHVTQGLVDLGFSLMESYEPKKSFGGKAAETNLGLSKMPAQQACKLGASILLETFKVHEPIRSDILEQVLNRVLTKAASPVSHFIDLLSNIVVSAPLVLQNSSSRVTETFDNLSFLPIDTVQGLLRAVQPLLKVSMSVRDSLILVLQKAIFSRQLDARKAAVAGFLLLLRNFKILGSLTSSQCSQAIGATQVQADVHACYNSAANEAFCLEILGSLRRCLSQQADVRLMLYEGFYDVLRRNSQLASSIMETLLSQIKQYYLPQQDLLPPLKLEGCIMAQGDQIFLQEPLAHLLCCIQHCLAWYKSTVHLCKGAEDEEEEEDVGFEQNFEEMLESVTRRMIKSELEDFELDKSADFSPSSGVGVKNNIYAIQVMGICEVLIEYNFKIGNFSKNKFEDVLGLFTCYNKLSEILKEKAGKNKSTLGNRIARSFLSMGFVSTLLTALFRDNAQSHEESLAVLRSSTEFMRYAVSVALQKVQQLEEMGQTDGPDGQNPEKMFQNLCKITRVLLWRYTSIPTAVEESGKKKGKSISLLCLEGLLRIFNTMQQLYAARIPQFLQALDITDGDAEEADINVTEKAAFQIRQFQRSLVNQLSSAEDDFNSKETQLLITILSTLSKLLDPGSQQFLQFLTWTVKICKENALEDLSCCKGLLTLLFSLHVLYKSPVSLLRELAQDIHACLGDIDQDVEIESRSHFAIVNVKTAAPTVCLLVLGQADKVLEEVDWLIKRLTILGSDTSEDSTQASNQTQALEKGVILQLGTLLTVFHELVQTALPAGSCVDSLLRSLSKTYAILTSLIKHYIQACRSTSNTVPGRLEKLVKLSGSHLTPQCYSFITYVQNIHSESLSFAEEKKKKKKEDETAVVSTVMAKVLRDTKPIPNLIFAIEQYEKFLIHLSKKSKVNLMQYMKLSTSRDFRINASMLDSVLQEQNTEDAENEPDNNQSGTAEQPDENQEPQKKRRRKK.

Lys-525 participates in a covalent cross-link: Glycyl lysine isopeptide (Lys-Gly) (interchain with G-Cter in ubiquitin). Phosphoserine occurs at positions 558 and 561. A Phosphothreonine modification is found at Thr-567.

This sequence belongs to the Fanconi anemia group I protein family. Homodimer. Part of a FANCI-FANCD2 heterodimeric complex that binds and scans dsDNA for DNA damage. Interacts with FANCL. Interacts with MTMR15/FAN1. Interacts with POLN. Interacts with UBL5; the interaction promotes FANCI homodimerization. Post-translationally, monoubiquitinated by FANCL during S phase and upon genotoxic stress. Deubiquitinated by USP1 as cells enter G2/M, or once DNA repair is completed. Monoubiquitination requires the FANCA-FANCB-FANCC-FANCE-FANCF-FANCG-FANCM complex. Ubiquitination is required for binding to chromatin, DNA repair, and normal cell cycle progression. Monoubiquitination is stimulated by DNA-binding. Phosphorylated in response to DNA damage by ATM and/or ATR. Phosphorylation of FANCI promotes ubiquitination of FANCD2, which prevents DNA release from the FANCI-FANCD2 complex.

Plays an essential role in the repair of DNA double-strand breaks by homologous recombination and in the repair of interstrand DNA cross-links (ICLs) by promoting FANCD2 monoubiquitination by FANCL and participating in recruitment to DNA repair sites. The FANCI-FANCD2 complex binds and scans double-stranded DNA (dsDNA) for DNA damage; this complex stalls at DNA junctions between double-stranded DNA and single-stranded DNA. Participates in S phase and G2 phase checkpoint activation upon DNA damage. This chain is Fanconi anemia group I protein, found in Gallus gallus (Chicken).